The chain runs to 188 residues: Elongation factor P (188 aa).

This sequence belongs to the elongation factor P family.

It is found in the cytoplasm. It participates in protein biosynthesis; polypeptide chain elongation. In terms of biological role, involved in peptide bond synthesis. Stimulates efficient translation and peptide-bond synthesis on native or reconstituted 70S ribosomes in vitro. Probably functions indirectly by altering the affinity of the ribosome for aminoacyl-tRNA, thus increasing their reactivity as acceptors for peptidyl transferase. This Chlorobium limicola (strain DSM 245 / NBRC 103803 / 6330) protein is Elongation factor P.